A 117-amino-acid polypeptide reads, in one-letter code: Hemerythrin subunit alpha (117 aa).

Positions 24, 53, 57, 72, 76, 105, and 110 each coordinate Fe cation.

It belongs to the hemerythrin family. Octamer composed of two types of chains: alpha and beta.

Functionally, hemerythrin is a respiratory protein in blood cells of certain marine worms. The oxygen-binding site in each chain contains two iron atoms. The polypeptide is Hemerythrin subunit alpha (Lingula reevii (Inarticulated brachiopod)).